A 172-amino-acid polypeptide reads, in one-letter code: 3-hydroxydecanoyl-[acyl-carrier-protein] dehydratase (172 aa).

Residue H71 is part of the active site.

The protein belongs to the thioester dehydratase family. FabA subfamily. Homodimer.

The protein localises to the cytoplasm. The catalysed reaction is a (3R)-hydroxyacyl-[ACP] = a (2E)-enoyl-[ACP] + H2O. It carries out the reaction (3R)-hydroxydecanoyl-[ACP] = (2E)-decenoyl-[ACP] + H2O. It catalyses the reaction (2E)-decenoyl-[ACP] = (3Z)-decenoyl-[ACP]. The protein operates within lipid metabolism; fatty acid biosynthesis. Necessary for the introduction of cis unsaturation into fatty acids. Catalyzes the dehydration of (3R)-3-hydroxydecanoyl-ACP to E-(2)-decenoyl-ACP and then its isomerization to Z-(3)-decenoyl-ACP. Can catalyze the dehydratase reaction for beta-hydroxyacyl-ACPs with saturated chain lengths up to 16:0, being most active on intermediate chain length. The sequence is that of 3-hydroxydecanoyl-[acyl-carrier-protein] dehydratase from Erwinia tasmaniensis (strain DSM 17950 / CFBP 7177 / CIP 109463 / NCPPB 4357 / Et1/99).